A 78-amino-acid polypeptide reads, in one-letter code: Acyl carrier protein (78 aa).

In terms of domain architecture, Carrier spans 2–77 (SDTAERVKKI…DAVKFIDKAS (76 aa)). An O-(pantetheine 4'-phosphoryl)serine modification is found at serine 37.

It belongs to the acyl carrier protein (ACP) family. Post-translationally, 4'-phosphopantetheine is transferred from CoA to a specific serine of apo-ACP by AcpS. This modification is essential for activity because fatty acids are bound in thioester linkage to the sulfhydryl of the prosthetic group.

The protein resides in the cytoplasm. It functions in the pathway lipid metabolism; fatty acid biosynthesis. Functionally, carrier of the growing fatty acid chain in fatty acid biosynthesis. This chain is Acyl carrier protein, found in Brucella abortus (strain S19).